A 112-amino-acid polypeptide reads, in one-letter code: Large ribosomal subunit protein uL22 (112 aa).

Belongs to the universal ribosomal protein uL22 family. Part of the 50S ribosomal subunit.

Functionally, this protein binds specifically to 23S rRNA; its binding is stimulated by other ribosomal proteins, e.g. L4, L17, and L20. It is important during the early stages of 50S assembly. It makes multiple contacts with different domains of the 23S rRNA in the assembled 50S subunit and ribosome. The globular domain of the protein is located near the polypeptide exit tunnel on the outside of the subunit, while an extended beta-hairpin is found that lines the wall of the exit tunnel in the center of the 70S ribosome. The chain is Large ribosomal subunit protein uL22 from Caldanaerobacter subterraneus subsp. tengcongensis (strain DSM 15242 / JCM 11007 / NBRC 100824 / MB4) (Thermoanaerobacter tengcongensis).